The primary structure comprises 60 residues: MTRGNQRDLARQKNQKKQADLTKGKRTDNLTVEQRKARDAELMREKQKKKEEAAAAGTSK.

Residues 1-53 (MTRGNQRDLARQKNQKKQADLTKGKRTDNLTVEQRKARDAELMREKQKKKEEA) show a composition bias toward basic and acidic residues. The interval 1–60 (MTRGNQRDLARQKNQKKQADLTKGKRTDNLTVEQRKARDAELMREKQKKKEEAAAAGTSK) is disordered.

The protein belongs to the SERF family.

In Drosophila melanogaster (Fruit fly), this protein is Putative SERF-like protein.